The chain runs to 1242 residues: DNA-directed RNA polymerase RPB2 homolog (1242 aa).

The C4-type zinc finger occupies 1180–1201 (CRNCGEPAIYNASHPIYKCMNC).

Belongs to the RNA polymerase beta chain family. In terms of assembly, part of the viral DNA-directed RNA polymerase that consists of 8 polII-like subunits (RPB1, RPB2, RPB3, RPB5, RPB6, RPB7, RPB9, RPB10), a capping enzyme and a termination factor.

Its subcellular location is the host cytoplasm. It localises to the virion. It carries out the reaction RNA(n) + a ribonucleoside 5'-triphosphate = RNA(n+1) + diphosphate. Functionally, catalytic component of the DNA-directed RNA polymerase (RNAP) that catalyzes the transcription in the cytoplasm of viral DNA into RNA using the four ribonucleoside triphosphates as substrates. Forms the polymerase active center together with RPB1. Part of the core element with the central large cleft, the clamp element that moves to open and close the cleft and the jaws that are thought to grab the incoming DNA template. The sequence is that of DNA-directed RNA polymerase RPB2 homolog from African swine fever virus (isolate Tick/Malawi/Lil 20-1/1983) (ASFV).